We begin with the raw amino-acid sequence, 347 residues long: Nicotinate-nucleotide--dimethylbenzimidazole phosphoribosyltransferase (347 aa).

Residue E316 is the Proton acceptor of the active site.

Belongs to the CobT family.

It catalyses the reaction 5,6-dimethylbenzimidazole + nicotinate beta-D-ribonucleotide = alpha-ribazole 5'-phosphate + nicotinate + H(+). It functions in the pathway nucleoside biosynthesis; alpha-ribazole biosynthesis; alpha-ribazole from 5,6-dimethylbenzimidazole: step 1/2. Catalyzes the synthesis of alpha-ribazole-5'-phosphate from nicotinate mononucleotide (NAMN) and 5,6-dimethylbenzimidazole (DMB). This chain is Nicotinate-nucleotide--dimethylbenzimidazole phosphoribosyltransferase, found in Vibrio parahaemolyticus serotype O3:K6 (strain RIMD 2210633).